The primary structure comprises 228 residues: GrpE protein homolog, mitochondrial (228 aa).

A compositionally biased stretch (basic and acidic residues) spans 46–57 (DEAKSEESKENN). Positions 46 to 66 (DEAKSEESKENNEDLTEEQSE) are disordered.

The protein belongs to the GrpE family. As to quaternary structure, component of the PAM complex, at least composed of SSC1 (mtHsp70), MGE1, TIM44, PAM16/TIM16, PAM17 and PAM18/TIM14. Interacts with SSQ1. In terms of processing, the N-terminus is blocked.

It localises to the mitochondrion matrix. Essential component of the PAM complex, a complex required for the translocation of transit peptide-containing proteins from the inner membrane into the mitochondrial matrix in an ATP-dependent manner. Seems to control the nucleotide-dependent binding of SSC1 to substrate proteins and the association of SSC1 with TIM44. This Saccharomyces cerevisiae (strain ATCC 204508 / S288c) (Baker's yeast) protein is GrpE protein homolog, mitochondrial (MGE1).